An 859-amino-acid polypeptide reads, in one-letter code: Protein O-mannosyl-transferase Tmtc1 (859 aa).

The Cytoplasmic segment spans residues 1-22 (MHTPKCRRPSMSATLSHKDLAG). Residues 23-43 (LAGCSALAFVLYLNTLNAGFV) form a helical membrane-spanning segment. The Extracellular segment spans residues 44-103 (YDDRRAILANGDVTGARPLANLLRNDFWGTPLVDSGSHGSWRPLCVLSFRLNYLAGGMTP). A helical transmembrane segment spans residues 104–124 (LGYHLVNVMLHCVATWLVFLV). Topologically, residues 125-134 (ARTLLPSRMG) are cytoplasmic. 2 consecutive transmembrane segments (helical) span residues 135–154 (VLAA…AVAG) and 155–174 (LVGR…YLSY). At 175 to 189 (RRHMLNREWGSLILT) the chain is on the cytoplasmic side. Residues 190-210 (IMLALAALLCKETAITALLLC) form a helical membrane-spanning segment. The Extracellular portion of the chain corresponds to 211–245 (GLCDVLSPVGRENSDKVCDGSISGLASFNFQRRFR). The helical transmembrane segment at 246-266 (SLSILGFTLLCGLYCRLSLLP) threads the bilayer. Residues 267 to 288 (RPSTAFSAADNPTAHESCFWTR) are Cytoplasmic-facing. Residues 289 to 309 (TLTFLYLPVANFGILLWPQEL) form a helical membrane-spanning segment. Residues 310 to 328 (SFDWGMEAVSRIRTLWDAR) lie on the Extracellular side of the membrane. Residues 329-349 (NILTAGFYGSLVAILWKGSGL) traverse the membrane as a helical segment. The Cytoplasmic portion of the chain corresponds to 350-422 (RSAASPMDFA…SWTAAPILGT (73 aa)). Residues 423–443 (AFLVLPFLPASNLLFYVGFVM) form a helical membrane-spanning segment. The Extracellular segment spans residues 444 to 446 (AER). Residues 447-467 (VLYLPSVGYCLLFGLGFGHLW) traverse the membrane as a helical segment. Over 468–473 (QRVNSS) the chain is Cytoplasmic. Residues 474–493 (WRSRLMLLCGLALLLGVHGV) traverse the membrane as a helical segment. The Extracellular segment spans residues 494–859 (RTFRRNLDWR…RMNVHKHENE (366 aa)). 9 TPR repeats span residues 518-551 (PKAL…RPTM), 552-585 (ADAH…RPQL), 586-620 (AVAY…EGSG), 632-665 (YTCY…LPLL), 671-704 (AVLH…QPEQ), 705-739 (GAAY…APLE), 740-773 (PSSH…APQD), 774-807 (YTLQ…QPMA), and 808-841 (AHAH…QPGH). An N-linked (GlcNAc...) asparagine glycan is attached at Asn567. Asn718 is a glycosylation site (N-linked (GlcNAc...) asparagine).

This sequence belongs to the TMTC family.

The protein resides in the membrane. The protein localises to the endoplasmic reticulum. It carries out the reaction a di-trans,poly-cis-dolichyl beta-D-mannosyl phosphate + L-seryl-[protein] = 3-O-(alpha-D-mannosyl)-L-seryl-[protein] + a di-trans,poly-cis-dolichyl phosphate + H(+). The enzyme catalyses a di-trans,poly-cis-dolichyl beta-D-mannosyl phosphate + L-threonyl-[protein] = 3-O-(alpha-D-mannosyl)-L-threonyl-[protein] + a di-trans,poly-cis-dolichyl phosphate + H(+). The protein operates within protein modification; protein glycosylation. Functionally, transfers mannosyl residues to the hydroxyl group of serine or threonine residues. This is Protein O-mannosyl-transferase Tmtc1 from Drosophila melanogaster (Fruit fly).